The following is a 163-amino-acid chain: Phosphopantetheine adenylyltransferase (163 aa).

Serine 10 is a substrate binding site. Residues 10–11 and histidine 18 contribute to the ATP site; that span reads SF. Substrate is bound by residues lysine 42, leucine 74, and arginine 88. Residues 89-91, glutamate 99, and 124-130 each bind ATP; these read GLR and YSFLSSS.

Belongs to the bacterial CoaD family. Homohexamer. Requires Mg(2+) as cofactor.

It is found in the cytoplasm. The catalysed reaction is (R)-4'-phosphopantetheine + ATP + H(+) = 3'-dephospho-CoA + diphosphate. Its pathway is cofactor biosynthesis; coenzyme A biosynthesis; CoA from (R)-pantothenate: step 4/5. Functionally, reversibly transfers an adenylyl group from ATP to 4'-phosphopantetheine, yielding dephospho-CoA (dPCoA) and pyrophosphate. This Bacillus mycoides (strain KBAB4) (Bacillus weihenstephanensis) protein is Phosphopantetheine adenylyltransferase.